The following is a 68-amino-acid chain: uncharacterized protein (68 aa).

In terms of domain architecture, HMA spans 2–67; it reads KTITLNIKGI…VIEDAGFDAT (66 aa). 2 residues coordinate a metal cation: C13 and C16.

This is an uncharacterized protein from Haemophilus influenzae (strain ATCC 51907 / DSM 11121 / KW20 / Rd).